Here is a 377-residue protein sequence, read N- to C-terminus: tRNA/tmRNA (uracil-C(5))-methyltransferase (377 aa).

Glutamine 199, tyrosine 227, asparagine 232, glutamate 248, and aspartate 308 together coordinate S-adenosyl-L-methionine. The Nucleophile role is filled by cysteine 333. Glutamate 367 functions as the Proton acceptor in the catalytic mechanism.

This sequence belongs to the class I-like SAM-binding methyltransferase superfamily. RNA M5U methyltransferase family. TrmA subfamily.

It carries out the reaction uridine(54) in tRNA + S-adenosyl-L-methionine = 5-methyluridine(54) in tRNA + S-adenosyl-L-homocysteine + H(+). The catalysed reaction is uridine(341) in tmRNA + S-adenosyl-L-methionine = 5-methyluridine(341) in tmRNA + S-adenosyl-L-homocysteine + H(+). Functionally, dual-specificity methyltransferase that catalyzes the formation of 5-methyluridine at position 54 (m5U54) in all tRNAs, and that of position 341 (m5U341) in tmRNA (transfer-mRNA). This chain is tRNA/tmRNA (uracil-C(5))-methyltransferase, found in Aeromonas hydrophila subsp. hydrophila (strain ATCC 7966 / DSM 30187 / BCRC 13018 / CCUG 14551 / JCM 1027 / KCTC 2358 / NCIMB 9240 / NCTC 8049).